A 74-amino-acid chain; its full sequence is Alpha-conotoxin GeXIVA (74 aa).

The first 22 residues, 1 to 22, serve as a signal peptide directing secretion; the sequence is MKLTCVLIITVLFLTACQLTTA. The propeptide occupies 23 to 46; sequence VTYSRGEHKHRALMSTGTNYRLPK. Positions 56 to 64 are interacts with alpha-9-alpha-10 (CHRNA9-CHRNA10) nAChR; the sequence is RSPYDRRRR.

This sequence belongs to the conotoxin O1 superfamily. The native disulfide bond pairing has not been studied. Three isomers may exist: the bead isomer (I-II; III-IV), the globular isomer (I-III; II-IV), the ribbon isomer (I-IV; II-III). They have all been synthesized and their activity tested. All of them show similar potency on alpha-9-alpha-10 (CHRNA9-CHRNA10) nAChR, showing that disulfide bonds does not significantly affect their activity. In addition, removal of disulfide bonds does not affect the activity on alpha-9-alpha-10 (CHRNA9-CHRNA10) nAChR either. In terms of tissue distribution, expressed by the venom duct.

The protein localises to the secreted. Alpha-conotoxins act on postsynaptic membranes, they bind to the nicotinic acetylcholine receptors (nAChR) and thus inhibit them. This toxin is very potent on alpha-9-alpha-10/CHRNA9-CHRNA10 nAChR (IC(50)=4.61-12 nM for the bead isomer (I-II; III-IV), IC(50)=7-16 nM for the ribbon isomer (I-IV; II-III) and IC(50)=22.7 nM for the globular isomer (I-III; II-IV)). The bead isomer also shows a weak inhibition on other nAChRs (alpha-1-beta-1-delta-epsilon/CHRNA1-CHRNB1-CHRND-CHRNE, alpha-7/CHRNA7, alpha-6/alpha-3-beta-2-beta-3 (CHRNA6/CHRNA3-CHRNB2-CHRNB3), alpha-3-beta-2/CHRNA3-CHRNB2, alpha-2-beta-2/CHRNA2-CHRNB2, alpha-6/alpha-3-beta-4 (CHRNA6/CHRNA3-CHRNB4), alpha-4-beta-2/CHRNA4-CHRNB2, alpha-4-beta-4/CHRNA4-CHRNB4, alpha-2-beta-4/CHRNA2-CHRNB4, alpha-3-beta-4/CHRNA3-CHRNB4). The toxin blockade is voltage-dependent, and its binding site does not overlap with the binding site of the competitive antagonist alpha-conotoxin RgIA. The toxin inhibits Sf9 cell growth. Both the bead and ribbon isomers relieve pain effects in the rat chronic constriction injury (CCI) model of neuropathic pain, and in the acute pain model of tail flick test, but have no effect on motor performance. The sequence is that of Alpha-conotoxin GeXIVA from Conus generalis (General cone).